A 282-amino-acid chain; its full sequence is Ribosomal protein L11 methyltransferase (282 aa).

Threonine 133, glycine 154, aspartate 175, and asparagine 216 together coordinate S-adenosyl-L-methionine.

Belongs to the methyltransferase superfamily. PrmA family.

It is found in the cytoplasm. It carries out the reaction L-lysyl-[protein] + 3 S-adenosyl-L-methionine = N(6),N(6),N(6)-trimethyl-L-lysyl-[protein] + 3 S-adenosyl-L-homocysteine + 3 H(+). Functionally, methylates ribosomal protein L11. The sequence is that of Ribosomal protein L11 methyltransferase from Campylobacter jejuni subsp. doylei (strain ATCC BAA-1458 / RM4099 / 269.97).